Consider the following 343-residue polypeptide: Ferredoxin--NADP reductase (343 aa).

Residues Cys18, Asp37, Gln45, Tyr50, Val90, Phe125, Asp290, and Thr331 each contribute to the FAD site.

The protein belongs to the ferredoxin--NADP reductase type 2 family. Homodimer. Requires FAD as cofactor.

It catalyses the reaction 2 reduced [2Fe-2S]-[ferredoxin] + NADP(+) + H(+) = 2 oxidized [2Fe-2S]-[ferredoxin] + NADPH. This is Ferredoxin--NADP reductase from Parvibaculum lavamentivorans (strain DS-1 / DSM 13023 / NCIMB 13966).